The primary structure comprises 415 residues: Lysosome-associated membrane glycoprotein 2 (415 aa).

A signal peptide spans 1–25 (MCLSPVKGAKLILIFLFLGAVQSNA). Residues 26-188 (LIVNLTDSKG…SKNEQVCEED (163 aa)) form a first lumenal domain region. Residues 26–379 (LIVNLTDSKG…AQDCSADEDN (354 aa)) are Lumenal-facing. Asn-29, Asn-45, Asn-54, Asn-57, Asn-97, Asn-115, and Asn-175 each carry an N-linked (GlcNAc...) asparagine glycan. An intrachain disulfide couples Cys-37 to Cys-75. Cysteines 149 and 185 form a disulfide. The interval 189–233 (QTPTTVAPIIHTTAPSTTTTLTPTSTPTPTPTPTPTVGNYSIRNG) is hinge. A compositionally biased stretch (low complexity) spans 202 to 213 (APSTTTTLTPTS). A disordered region spans residues 202–227 (APSTTTTLTPTSTPTPTPTPTPTVGN). Residues Asn-227, Asn-234, Asn-247, Asn-265, Asn-280, Asn-312, Asn-317, Asn-322, and Asn-361 are each glycosylated (N-linked (GlcNAc...) asparagine). Positions 234–379 (NTTCLLATMG…AQDCSADEDN (146 aa)) are second lumenal domain. An intrachain disulfide couples Cys-237 to Cys-270. Cys-336 and Cys-373 form a disulfide bridge. Residues 380 to 404 (FLVPIAVGAALGGVLILVLLAYFIG) form a helical membrane-spanning segment. The Cytoplasmic segment spans residues 405-415 (LKRHHTGYEQF). The segment at 406-409 (KRHH) is important for binding and subsequent lysosomal degradation of target proteins.

The protein belongs to the LAMP family. In terms of assembly, monomer. Forms large homooligomers. Interacts (via its cytoplasmic region) with HSPA8; HSPA8 mediates recruitment of proteins with a KFERQ motif to the surface of the lysosome for chaperone-mediated autophagy. Interacts with HSP90 in the lysosome lumen; this enhances LAMP2 stability. Interacts with MLLT11. Interacts with ABCB9. Interacts with FURIN. Interacts with CT55; this interaction may be important for LAMP2 protein stability. Interacts with TMEM175; inhibiting the proton channel activity of TMEM175. Forms a ternary complex with RAB7A and RUFY4 (via RUN domain); the interaction with RAB7A is mediated by RUFY4 (via RUN and coiled coil domains). Extensively N-glycosylated. Contains a minor proportion of O-linked glycans. In terms of tissue distribution, detected in liver and kidney (at protein level). Detected in liver and kidney.

It localises to the lysosome membrane. The protein localises to the endosome membrane. The protein resides in the cytoplasmic vesicle. Its subcellular location is the autophagosome membrane. It is found in the cell membrane. Lysosomal membrane glycoprotein which plays an important role in lysosome biogenesis, lysosomal pH regulation and autophagy. Acts as an important regulator of lysosomal lumen pH regulation by acting as a direct inhibitor of the proton channel TMEM175, facilitating lysosomal acidification for optimal hydrolase activity. Plays an important role in chaperone-mediated autophagy, a process that mediates lysosomal degradation of proteins in response to various stresses and as part of the normal turnover of proteins with a long biological half-live. Functions by binding target proteins, such as GAPDH, NLRP3 and MLLT11, and targeting them for lysosomal degradation. In the chaperone-mediated autophagy, acts downstream of chaperones, such as HSPA8/HSC70, which recognize and bind substrate proteins and mediate their recruitment to lysosomes, where target proteins bind LAMP2. Plays a role in lysosomal protein degradation in response to starvation. Required for the fusion of autophagosomes with lysosomes during autophagy. Cells that lack LAMP2 express normal levels of VAMP8, but fail to accumulate STX17 on autophagosomes, which is the most likely explanation for the lack of fusion between autophagosomes and lysosomes. Required for normal degradation of the contents of autophagosomes. Required for efficient MHC class II-mediated presentation of exogenous antigens via its function in lysosomal protein degradation; antigenic peptides generated by proteases in the endosomal/lysosomal compartment are captured by nascent MHC II subunits. Is not required for efficient MHC class II-mediated presentation of endogenous antigens. This is Lysosome-associated membrane glycoprotein 2 (Lamp2) from Mus musculus (Mouse).